A 417-amino-acid chain; its full sequence is 3-oxo-isoapionate-4-phosphate decarboxylase (417 aa).

Mg(2+) contacts are provided by Lys177, Asp179, and Glu180. Lys177 bears the N6-carboxylysine mark.

The protein belongs to the RuBisCO large chain family. It depends on Mg(2+) as a cofactor.

It catalyses the reaction 3-oxoisoapionate 4-phosphate + H(+) = L-erythrulose 1-phosphate + CO2. It participates in carbohydrate metabolism. Involved in catabolism of D-apiose. Catalyzes the decarboxylation of 3-oxo-isoapionate 4-phosphate to L-erythrulose 1-phosphate. This is 3-oxo-isoapionate-4-phosphate decarboxylase from Rhizobium etli (strain ATCC 51251 / DSM 11541 / JCM 21823 / NBRC 15573 / CFN 42).